Consider the following 370-residue polypeptide: tRNA (guanine(26)-N(2))-dimethyltransferase (370 aa).

Residues 4 to 368 (TWVTEGRTTI…APLEEIRDCI (365 aa)) form the Trm1 methyltransferase domain. S-adenosyl-L-methionine contacts are provided by arginine 41, arginine 66, aspartate 82, aspartate 108, and alanine 109. Zn(2+) is bound by residues cysteine 237, cysteine 240, cysteine 256, and cysteine 259.

It belongs to the class I-like SAM-binding methyltransferase superfamily. Trm1 family.

The enzyme catalyses guanosine(26) in tRNA + 2 S-adenosyl-L-methionine = N(2)-dimethylguanosine(26) in tRNA + 2 S-adenosyl-L-homocysteine + 2 H(+). Dimethylates a single guanine residue at position 26 of a number of tRNAs using S-adenosyl-L-methionine as donor of the methyl groups. This is tRNA (guanine(26)-N(2))-dimethyltransferase from Methanospirillum hungatei JF-1 (strain ATCC 27890 / DSM 864 / NBRC 100397 / JF-1).